A 216-amino-acid chain; its full sequence is ATP-dependent Clp protease proteolytic subunit (216 aa).

The active-site Nucleophile is the serine 120. Residue histidine 145 is part of the active site.

The protein belongs to the peptidase S14 family. In terms of assembly, fourteen ClpP subunits assemble into 2 heptameric rings which stack back to back to give a disk-like structure with a central cavity, resembling the structure of eukaryotic proteasomes.

It localises to the cytoplasm. The enzyme catalyses Hydrolysis of proteins to small peptides in the presence of ATP and magnesium. alpha-casein is the usual test substrate. In the absence of ATP, only oligopeptides shorter than five residues are hydrolyzed (such as succinyl-Leu-Tyr-|-NHMec, and Leu-Tyr-Leu-|-Tyr-Trp, in which cleavage of the -Tyr-|-Leu- and -Tyr-|-Trp bonds also occurs).. Cleaves peptides in various proteins in a process that requires ATP hydrolysis. Has a chymotrypsin-like activity. Plays a major role in the degradation of misfolded proteins. The protein is ATP-dependent Clp protease proteolytic subunit of Cupriavidus metallidurans (strain ATCC 43123 / DSM 2839 / NBRC 102507 / CH34) (Ralstonia metallidurans).